The sequence spans 636 residues: Epithelial sodium channel subunit alpha (636 aa).

Residues 1–28 (MKSENQPEDKRIGKLKREANMQKMKEAA) are disordered. The Cytoplasmic segment spans residues 1-77 (MKSENQPEDK…VCSKKNRMKT (77 aa)). A helical membrane pass occupies residues 78–98 (AFWSILFFFTFGLMYWQFGII). Over 99–549 (YREYFSFPVN…SQWSLWFGSS (451 aa)) the chain is Extracellular. 10 disulfide bridges follow: C126-C293, C218-C225, C270-C277, C381-C466, C403-C443, C403-C462, C407-C458, C416-C443, C416-C466, and C418-C432. Residues 550–570 (VLSVVELVELILDFIAITCIL) traverse the membrane as a helical segment. Topologically, residues 571–636 (AIHWLNMNRS…LRRVSSQQTE (66 aa)) are cytoplasmic.

Belongs to the amiloride-sensitive sodium channel (TC 1.A.6) family. SCNN1A subfamily. As to quaternary structure, heterotrimer; containing an alpha/SCNN1A, a beta/SCNN1B and a gamma/SCNN1G subunit.

The protein localises to the apical cell membrane. Its subcellular location is the cell projection. The protein resides in the cilium. It localises to the cytoplasmic granule. It is found in the cytoplasm. The protein localises to the cytoplasmic vesicle. Its subcellular location is the secretory vesicle. The protein resides in the acrosome. It localises to the flagellum. It catalyses the reaction Na(+)(in) = Na(+)(out). With respect to regulation, originally identified and characterized by its inhibition by the diuretic drug amiloride. This is one of the three pore-forming subunits of the heterotrimeric epithelial sodium channel (ENaC), a critical regulator of sodium balance and fluid homeostasis. ENaC operates in epithelial tissues, where it mediates the electrodiffusion of sodium ions from extracellular fluid through the apical membrane of cells, with water following osmotically. This chain is Epithelial sodium channel subunit alpha, found in Anolis carolinensis (Green anole).